We begin with the raw amino-acid sequence, 201 residues long: Large ribosomal subunit protein uL4 (201 aa).

The disordered stretch occupies residues K44–G66. A compositionally biased stretch (basic residues) spans G55 to G66.

It belongs to the universal ribosomal protein uL4 family. As to quaternary structure, part of the 50S ribosomal subunit.

Its function is as follows. One of the primary rRNA binding proteins, this protein initially binds near the 5'-end of the 23S rRNA. It is important during the early stages of 50S assembly. It makes multiple contacts with different domains of the 23S rRNA in the assembled 50S subunit and ribosome. Functionally, forms part of the polypeptide exit tunnel. In Alteromonas mediterranea (strain DSM 17117 / CIP 110805 / LMG 28347 / Deep ecotype), this protein is Large ribosomal subunit protein uL4.